The sequence spans 382 residues: Small ribosomal subunit protein bS1 homolog (382 aa).

S1 motif domains follow at residues 16–84, 102–167, 188–256, and 273–342; these read GDVV…LSKR, KEVF…LSHR, GSVL…LSIK, and GDVL…LSMR. Position 243 is a phosphoserine (Ser243).

This sequence belongs to the bacterial ribosomal protein bS1 family.

Functionally, plays a role in sporulation. Cannot be expressed in wild-type E.coli, does not complement an E.coli rpsA deletion. The chain is Small ribosomal subunit protein bS1 homolog from Bacillus subtilis (strain 168).